The chain runs to 151 residues: Peptide deformylase (151 aa).

Cysteine 88 and histidine 130 together coordinate Fe cation. Glutamate 131 is an active-site residue. Histidine 134 serves as a coordination point for Fe cation.

Belongs to the polypeptide deformylase family. Fe(2+) serves as cofactor.

It catalyses the reaction N-terminal N-formyl-L-methionyl-[peptide] + H2O = N-terminal L-methionyl-[peptide] + formate. Its function is as follows. Removes the formyl group from the N-terminal Met of newly synthesized proteins. Requires at least a dipeptide for an efficient rate of reaction. N-terminal L-methionine is a prerequisite for activity but the enzyme has broad specificity at other positions. This Heliobacterium modesticaldum (strain ATCC 51547 / Ice1) protein is Peptide deformylase.